The following is a 110-amino-acid chain: MRALKMNSISVSVTHGLIFSILLFVISVAGIIINRRNILILLMSIELMLLAVNTNFLIFANMHQQAMGGVFVFFIMAVAAAETAIGLAIVVAIFRKRKTIDLSKLNTLRG.

The next 3 helical transmembrane spans lie at 13–33, 38–58, and 70–90; these read VTHG…GIII, ILIL…NFLI, and VFVF…LAIV.

Belongs to the complex I subunit 4L family. In terms of assembly, NDH-1 is composed of 14 different subunits. Subunits NuoA, H, J, K, L, M, N constitute the membrane sector of the complex.

The protein localises to the cell inner membrane. It catalyses the reaction a quinone + NADH + 5 H(+)(in) = a quinol + NAD(+) + 4 H(+)(out). Its function is as follows. NDH-1 shuttles electrons from NADH, via FMN and iron-sulfur (Fe-S) centers, to quinones in the respiratory chain. The immediate electron acceptor for the enzyme in this species is believed to be ubiquinone. Couples the redox reaction to proton translocation (for every two electrons transferred, four hydrogen ions are translocated across the cytoplasmic membrane), and thus conserves the redox energy in a proton gradient. The chain is NADH-quinone oxidoreductase subunit K from Francisella tularensis subsp. holarctica (strain FTNF002-00 / FTA).